We begin with the raw amino-acid sequence, 258 residues long: Small ribosomal subunit protein uS2 (258 aa).

The protein belongs to the universal ribosomal protein uS2 family.

The polypeptide is Small ribosomal subunit protein uS2 (Leuconostoc mesenteroides subsp. mesenteroides (strain ATCC 8293 / DSM 20343 / BCRC 11652 / CCM 1803 / JCM 6124 / NCDO 523 / NBRC 100496 / NCIMB 8023 / NCTC 12954 / NRRL B-1118 / 37Y)).